The primary structure comprises 2039 residues: Calcium-channel protein CCH1 (2039 aa).

Disordered regions lie at residues 1 to 171 (MQGR…PPRS) and 206 to 288 (PQLK…PQKE). The segment covering 64-80 (STEEKKGDEYNGNDKDS) has biased composition (basic and acidic residues). Residue Asn98 is glycosylated (N-linked (GlcNAc...) asparagine). Composition is skewed to low complexity over residues 122-132 (SPSTKSAKSSS) and 147-164 (FSSY…SPSS). Residues 209–226 (KSEKSRPVSDVGEDRGEG) are compositionally biased toward basic and acidic residues. N-linked (GlcNAc...) asparagine glycosylation is found at Asn257 and Asn269. Basic residues predominate over residues 271–281 (SRKKPSPKFFH). A Phosphoserine modification is found at Ser284. The chain crosses the membrane as a helical span at residues 346-366 (YSLLYNTLLTFYAILLAIRTY). An N-linked (GlcNAc...) asparagine glycan is attached at Asn379. Residues 384–404 (FIFILSACFTGNDIAKIIAFG) traverse the membrane as a helical segment. Asn559 carries an N-linked (GlcNAc...) asparagine glycan. Transmembrane regions (helical) follow at residues 563–583 (MLVY…QGSF), 658–678 (IVNS…TDLM), and 691–711 (LFFI…LIAV). N-linked (GlcNAc...) asparagine glycans are attached at residues Asn754 and Asn760. 3 helical membrane-spanning segments follow: residues 766 to 786 (LAIY…DIGM), 809 to 829 (ISIV…PNMW), and 841 to 861 (FIIS…VLGH). N-linked (GlcNAc...) asparagine glycans are attached at residues Asn882 and Asn900. 2 helical membrane passes run 904–924 (FYFF…EGVI) and 942–962 (SFLS…LYAL). Asn968 is a glycosylation site (N-linked (GlcNAc...) asparagine). The helical transmembrane segment at 978–998 (FFIIWFLLSNSVILNIFIALI) threads the bilayer. Asn1153 carries an N-linked (GlcNAc...) asparagine glycan. The helical transmembrane segment at 1207–1227 (VFVFIFALATILLIVCSCYVT) threads the bilayer. Asn1240 carries an N-linked (GlcNAc...) asparagine glycan. A run of 2 helical transmembrane segments spans residues 1247–1267 (CAFI…DGFI) and 1277–1297 (PWNF…IAYL). Residue Asn1302 is glycosylated (N-linked (GlcNAc...) asparagine). Transmembrane regions (helical) follow at residues 1340–1360 (IFEA…WGLS) and 1408–1428 (FASA…VDLL). The N-linked (GlcNAc...) asparagine glycan is linked to Asn1433. A run of 5 helical transmembrane segments spans residues 1452 to 1472 (FLVL…VSFI), 1529 to 1549 (NFYY…MLLS), 1554 to 1574 (PGNL…VFLI), 1596 to 1616 (IRLS…HVPA), and 1618 to 1638 (HYWF…FIIP). An N-linked (GlcNAc...) asparagine glycan is attached at Asn1640. Residues 1654–1674 (LPPILSLTYTWGVLFLVYAIA) form a helical membrane-spanning segment. N-linked (GlcNAc...) asparagine glycans are attached at residues Asn1687 and Asn1732. A helical membrane pass occupies residues 1748–1768 (LMSWNIISMYIFVNMFVSLII). Residues Asn1770 and Asn1785 are each glycosylated (N-linked (GlcNAc...) asparagine). An EF-hand domain is found at 1787-1822 (SEIKKYIEAWSKFDTDGTGELELSYLPRIMHSFDGP). The segment at 2011–2039 (PRMNQDSTMEPPEEPIDNNDDSANDLIDR) is disordered. Residues 2021-2033 (PPEEPIDNNDDSA) are compositionally biased toward acidic residues.

It belongs to the calcium channel alpha-1 subunit (TC 1.A.1.11) family. As to quaternary structure, interacts with MID1 to form a Ca(2+) influx channel.

The protein localises to the cell membrane. In terms of biological role, voltage-gated, high-affinity calcium channel that functions together with MID1 to mediate calcium entry into cells. Required during conditions of environmental stress. The sequence is that of Calcium-channel protein CCH1 (CCH1) from Saccharomyces cerevisiae (strain ATCC 204508 / S288c) (Baker's yeast).